Here is an 86-residue protein sequence, read N- to C-terminus: Ferredoxin YfhL (86 aa).

4Fe-4S ferredoxin-type domains lie at 1–29 and 31–65; these read MALL…MGDH and YEIN…KDPA. 8 residues coordinate [4Fe-4S] cluster: cysteine 9, cysteine 12, cysteine 15, cysteine 19, cysteine 38, cysteine 41, cysteine 50, and cysteine 54.

[4Fe-4S] cluster serves as cofactor.

Functionally, ferredoxins are iron-sulfur proteins that transfer electrons in a wide variety of metabolic reactions. The chain is Ferredoxin YfhL (yfhL) from Escherichia coli (strain K12).